A 249-amino-acid chain; its full sequence is 5'-nucleotidase SurE (249 aa).

A divalent metal cation contacts are provided by Asp9, Asp10, Ser40, and Asn92.

The protein belongs to the SurE nucleotidase family. A divalent metal cation serves as cofactor.

It localises to the cytoplasm. It catalyses the reaction a ribonucleoside 5'-phosphate + H2O = a ribonucleoside + phosphate. Functionally, nucleotidase that shows phosphatase activity on nucleoside 5'-monophosphates. The polypeptide is 5'-nucleotidase SurE (Shewanella sediminis (strain HAW-EB3)).